The primary structure comprises 103 residues: Large ribosomal subunit protein bL21 (103 aa).

This sequence belongs to the bacterial ribosomal protein bL21 family. In terms of assembly, part of the 50S ribosomal subunit. Contacts protein L20.

In terms of biological role, this protein binds to 23S rRNA in the presence of protein L20. The sequence is that of Large ribosomal subunit protein bL21 from Shewanella sp. (strain MR-7).